The chain runs to 374 residues: Alanine racemase (374 aa).

K35 (proton acceptor; specific for D-alanine) is an active-site residue. Residue K35 is modified to N6-(pyridoxal phosphate)lysine. R133 contacts substrate. Y261 (proton acceptor; specific for L-alanine) is an active-site residue. M315 provides a ligand contact to substrate.

This sequence belongs to the alanine racemase family. Pyridoxal 5'-phosphate is required as a cofactor.

It carries out the reaction L-alanine = D-alanine. The protein operates within amino-acid biosynthesis; D-alanine biosynthesis; D-alanine from L-alanine: step 1/1. Catalyzes the interconversion of L-alanine and D-alanine. May also act on other amino acids. The protein is Alanine racemase (alr) of Psychrobacter sp. (strain PRwf-1).